A 184-amino-acid chain; its full sequence is Phosphodiesterase YfcE (184 aa).

Mn(2+) contacts are provided by Asp9, His11, Asp37, Asn73, His105, His127, and His129.

This sequence belongs to the metallophosphoesterase superfamily. YfcE family. The cofactor is Mn(2+).

In terms of biological role, shows phosphodiesterase activity. This chain is Phosphodiesterase YfcE (yfcE), found in Escherichia coli O157:H7.